A 320-amino-acid polypeptide reads, in one-letter code: MIGKLVRDLKIPDQRHPEKAHRPDNDQPRKPSWIRVKAPTSEGYKETRDIIRGQKLATVCEEAGCPNVGECWGQGHATMMIMGEICTRGCTFCNVATGKPQALDAFEPGRVAHAVSQLGLKHVVVTSVDRDDLEDGGAEHFAQTIRAIRHRAQGTTVEVLVPDFLKCGPEALETVVAARPDVFNHNLETVPGLYPEVRPGARYFHSLRLLQRAKELDPQIFTKSGIMVGLGEDRQGVMQVMDDMRAAGVDFLTIGQYLQPTPKHHRVDRFVTPEEFASYEKAAYGKGFLMVSATPLTRSSYHAGEDFARLRAARLERLGA.

Over residues 1 to 29 (MIGKLVRDLKIPDQRHPEKAHRPDNDQPR) the composition is skewed to basic and acidic residues. The interval 1–32 (MIGKLVRDLKIPDQRHPEKAHRPDNDQPRKPS) is disordered. The [4Fe-4S] cluster site is built by C60, C65, C71, C86, C90, C93, and S300. One can recognise a Radical SAM core domain in the interval 71–289 (CWGQGHATMM…EKAAYGKGFL (219 aa)).

It belongs to the radical SAM superfamily. Lipoyl synthase family. Requires [4Fe-4S] cluster as cofactor.

The protein resides in the cytoplasm. It catalyses the reaction [[Fe-S] cluster scaffold protein carrying a second [4Fe-4S](2+) cluster] + N(6)-octanoyl-L-lysyl-[protein] + 2 oxidized [2Fe-2S]-[ferredoxin] + 2 S-adenosyl-L-methionine + 4 H(+) = [[Fe-S] cluster scaffold protein] + N(6)-[(R)-dihydrolipoyl]-L-lysyl-[protein] + 4 Fe(3+) + 2 hydrogen sulfide + 2 5'-deoxyadenosine + 2 L-methionine + 2 reduced [2Fe-2S]-[ferredoxin]. It participates in protein modification; protein lipoylation via endogenous pathway; protein N(6)-(lipoyl)lysine from octanoyl-[acyl-carrier-protein]: step 2/2. Its function is as follows. Catalyzes the radical-mediated insertion of two sulfur atoms into the C-6 and C-8 positions of the octanoyl moiety bound to the lipoyl domains of lipoate-dependent enzymes, thereby converting the octanoylated domains into lipoylated derivatives. This is Lipoyl synthase from Cereibacter sphaeroides (strain ATCC 17025 / ATH 2.4.3) (Rhodobacter sphaeroides).